We begin with the raw amino-acid sequence, 96 residues long: UPF0213 protein BCE33L0031 (96 aa).

Positions Asn-4–Glu-79 constitute a GIY-YIG domain.

The protein belongs to the UPF0213 family.

In Bacillus cereus (strain ZK / E33L), this protein is UPF0213 protein BCE33L0031.